Reading from the N-terminus, the 276-residue chain is Orotidine 5'-phosphate decarboxylase (276 aa).

Substrate contacts are provided by residues D40, 62-64 (KTH), 93-102 (DRKFIDIGNT), Y228, and R246. The Proton donor role is filled by K95.

The protein belongs to the OMP decarboxylase family.

The catalysed reaction is orotidine 5'-phosphate + H(+) = UMP + CO2. It participates in pyrimidine metabolism; UMP biosynthesis via de novo pathway; UMP from orotate: step 2/2. The sequence is that of Orotidine 5'-phosphate decarboxylase (pyrG) from Penicillium nalgiovense.